A 492-amino-acid polypeptide reads, in one-letter code: Aerolysin-4 (492 aa).

The first 23 residues, 1–23 (MKKLKITGLSLIISGLLMAQAQA), serve as a signal peptide directing secretion. Cystine bridges form between cysteine 42–cysteine 98 and cysteine 182–cysteine 187. The interaction with host N-linked glycan stretch occupies residues 68–84 (WQISGLANGWVIMGPGY). Residues 256-288 (YGLSEKVTTKNKFKWPLVGETELSIEIAANQSW) form a part of the transmembrane beta-barrel after proteolytic activation of the toxin and insertion into the host membrane region. The tract at residues 346 to 355 (RWGGNAWYTH) is interaction with glycans from host GPI-anchor. The propeptide occupies 446–492 (AAASHSSRARNLSAGQGLRLEIPLDAQELSGLGFNNVSLSVTPAANQ).

Belongs to the aerolysin family. In terms of assembly, homodimer in solution; homoheptamer in the host membrane. After binding to GPI-anchored proteins in target membranes and proteolytic removal of the C-terminal propeptide, the protein assembles into a heptameric pre-pore complex. A further conformation change leads to insertion into the host membrane. Proteolytic cleavage and subsequent release of the propeptide trigger a major conformation change, leading to the formation of a heptameric pre-pore that then inserts into the host membrane.

The protein localises to the secreted. It localises to the host cell membrane. In terms of biological role, secreted, cytolytic toxin that forms pores in host membranes after proteolytic removal of a C-terminal propeptide, leading to destruction of the membrane permeability barrier and cell death. The pores are formed by transmembrane beta-strands and are approximately 3 nm in diameter. This Aeromonas hydrophila protein is Aerolysin-4 (ahh4).